A 287-amino-acid chain; its full sequence is Membrane protein insertase YidC 2 (287 aa).

The signal sequence occupies residues 1-26; it reads MKKKKRFKQKLLIASLVIGLVAVLSG. The N-palmitoyl cysteine moiety is linked to residue Cys27. Residue Cys27 is the site of S-diacylglycerol cysteine attachment. Helical transmembrane passes span 65 to 85, 135 to 155, 178 to 198, 207 to 224, and 228 to 250; these read YAVGIIVVTILIRLLIMPLMI, MMGCLPLLIQMPILLGFYQAI, YILPIVAALTTFLSSKISMMG, AMIVYIMPVMILFMGITL, and LALYWIIGNIFTVFQTLLINNPF.

The protein belongs to the OXA1/ALB3/YidC family. Type 2 subfamily.

Its subcellular location is the cell membrane. Its function is as follows. Required for the insertion and/or proper folding and/or complex formation of integral membrane proteins into the membrane. Involved in integration of membrane proteins that insert both dependently and independently of the Sec translocase complex, as well as at least some lipoproteins. This Listeria innocua serovar 6a (strain ATCC BAA-680 / CLIP 11262) protein is Membrane protein insertase YidC 2.